The chain runs to 297 residues: Protein phosphatase PTC7 homolog (297 aa).

The transit peptide at 1-27 directs the protein to the mitochondrion; it reads MFSVLSCGRLVARAVFGGLSQTDSRDY. One can recognise a PPM-type phosphatase domain in the interval 28-292; that stretch reads SLVTASCGFG…DDITVLLSIV (265 aa). Positions 71, 72, and 216 each coordinate Mn(2+).

Belongs to the PP2C family. Mg(2+) serves as cofactor. Mn(2+) is required as a cofactor.

It is found in the mitochondrion matrix. The catalysed reaction is O-phospho-L-seryl-[protein] + H2O = L-seryl-[protein] + phosphate. It catalyses the reaction O-phospho-L-threonyl-[protein] + H2O = L-threonyl-[protein] + phosphate. Functionally, protein phosphatase which positively regulates biosynthesis of the ubiquinone, coenzyme Q. Dephosphorylates the ubiquinone biosynthesis protein coq7 which is likely to lead to its activation. The protein is Protein phosphatase PTC7 homolog (pptc7) of Xenopus laevis (African clawed frog).